The primary structure comprises 1321 residues: Probable serine/threonine-protein kinase fnkE (1321 aa).

FNIP repeat units follow at residues 108–149 (YNQL…NLSS), 150–191 (YNQP…DLSS), 192–233 (YNKL…DLSS), and 255–296 (YNKL…DISS). The Protein kinase 1 domain occupies 295–595 (SSYNQLLTPG…YNYVIKDSIM (301 aa)). Residues 301–309 (LTPGTLSNN) and lysine 325 each bind ATP. Catalysis depends on aspartate 465, which acts as the Proton acceptor. 2 FNIP repeats span residues 654–696 (FNHP…FNKF) and 741–783 (FNQP…LGSN). The 269-residue stretch at 860–1128 (WEIISTLGSG…EGDSVFEKYL (269 aa)) folds into the Protein kinase 2 domain. ATP is bound by residues 866-874 (LGSGNFGKV) and lysine 895. Residue aspartate 990 is the Proton acceptor of the active site. FNIP repeat units follow at residues 1160–1202 (YNQM…LGNE) and 1224–1268 (FNFT…LGSN).

This sequence belongs to the protein kinase superfamily. STE Ser/Thr protein kinase family. It depends on Mg(2+) as a cofactor.

It catalyses the reaction L-seryl-[protein] + ATP = O-phospho-L-seryl-[protein] + ADP + H(+). It carries out the reaction L-threonyl-[protein] + ATP = O-phospho-L-threonyl-[protein] + ADP + H(+). The sequence is that of Probable serine/threonine-protein kinase fnkE from Dictyostelium discoideum (Social amoeba).